The following is a 430-amino-acid chain: Tol-Pal system protein TolB (430 aa).

The first 21 residues, 1–21 (MKQALRVAFGFLILWASVLHA), serve as a signal peptide directing secretion.

This sequence belongs to the TolB family. As to quaternary structure, the Tol-Pal system is composed of five core proteins: the inner membrane proteins TolA, TolQ and TolR, the periplasmic protein TolB and the outer membrane protein Pal. They form a network linking the inner and outer membranes and the peptidoglycan layer.

The protein localises to the periplasm. Functionally, part of the Tol-Pal system, which plays a role in outer membrane invagination during cell division and is important for maintaining outer membrane integrity. TolB occupies a key intermediary position in the Tol-Pal system because it communicates directly with both membrane-embedded components, Pal in the outer membrane and TolA in the inner membrane. The sequence is that of Tol-Pal system protein TolB from Escherichia coli O8 (strain IAI1).